Here is a 341-residue protein sequence, read N- to C-terminus: L-threonine 3-dehydrogenase (341 aa).

Cys38 is a binding site for Zn(2+). Active-site charge relay system residues include Thr40 and His43. The Zn(2+) site is built by His63, Glu64, Cys93, Cys96, Cys99, and Cys107. Residues Ile175, Asp195, Arg200, 262–264 (LGI), and 286–287 (IY) contribute to the NAD(+) site.

This sequence belongs to the zinc-containing alcohol dehydrogenase family. In terms of assembly, homotetramer. Zn(2+) serves as cofactor.

It is found in the cytoplasm. It catalyses the reaction L-threonine + NAD(+) = (2S)-2-amino-3-oxobutanoate + NADH + H(+). The protein operates within amino-acid degradation; L-threonine degradation via oxydo-reductase pathway; glycine from L-threonine: step 1/2. Functionally, catalyzes the NAD(+)-dependent oxidation of L-threonine to 2-amino-3-ketobutyrate. This Solibacter usitatus (strain Ellin6076) protein is L-threonine 3-dehydrogenase.